We begin with the raw amino-acid sequence, 951 residues long: Protein inturned (951 aa).

3 disordered regions span residues 1-32, 189-208, and 687-765; these read MEHS…FSSS, SSRN…NQRL, and TPKR…GGSG. A PDZ domain is found at 187-269; that stretch reads HQSSRNSKRS…PMQLKLTFET (83 aa). The span at 715 to 726 shows a compositional bias: low complexity; sequence PTRSSGGSDSGT. A compositionally biased stretch (basic and acidic residues) spans 743–752; that stretch reads MARKFGRRES. Positions 754-765 are enriched in gly residues; the sequence is GSGGSDGSGGSG.

It belongs to the inturned family. In terms of assembly, interacts with fuz and wdpcp; fuz, intu and wdpcp probably form the core CPLANE (ciliogenesis and planar polarity effectors) complex. Expressed in the neural plate during neural tube closure with subsequent strong expression in the ventral neural tube and in facial mesenchyme.

The protein resides in the cell surface. The protein localises to the cell membrane. Its subcellular location is the cytoplasm. It is found in the cytoskeleton. It localises to the cilium basal body. In terms of biological role, plays a role in the definition of cell polarity via the planar cell polarity (PCP) cascade. Required for ciliogenesis by controlling the organization of the apical actin cytoskeleton and the positioning of the basal bodies at the apical cell surface, which in turn is essential for the normal orientation of elongating ciliary microtubules. Proposed to function as core component of a functional module called CPLANE (ciliogenesis and planar polarity effectors) involved in recruitment of peripheral IFT-A proteins to basal bodies. Controls the localization of both rhoa and disheveled in multi-ciliated cells. Has an indirect effect on hedgehog signaling. This Xenopus laevis (African clawed frog) protein is Protein inturned.